The primary structure comprises 310 residues: Ribosomal RNA small subunit methyltransferase H (310 aa).

S-adenosyl-L-methionine is bound by residues 33 to 35 (AGH), Asp-53, Phe-79, Asp-100, and Gln-107.

This sequence belongs to the methyltransferase superfamily. RsmH family.

Its subcellular location is the cytoplasm. It catalyses the reaction cytidine(1402) in 16S rRNA + S-adenosyl-L-methionine = N(4)-methylcytidine(1402) in 16S rRNA + S-adenosyl-L-homocysteine + H(+). Functionally, specifically methylates the N4 position of cytidine in position 1402 (C1402) of 16S rRNA. In Clostridium perfringens (strain 13 / Type A), this protein is Ribosomal RNA small subunit methyltransferase H.